A 78-amino-acid chain; its full sequence is Putative membrane protein insertion efficiency factor (78 aa).

This sequence belongs to the UPF0161 family.

The protein resides in the cell membrane. Functionally, could be involved in insertion of integral membrane proteins into the membrane. This Bacillus thuringiensis subsp. konkukian (strain 97-27) protein is Putative membrane protein insertion efficiency factor.